We begin with the raw amino-acid sequence, 506 residues long: 2-isopropylmalate synthase (506 aa).

Positions 8 to 272 (LIVFDTTLRD…ETGIQLKEIL (265 aa)) constitute a Pyruvate carboxyltransferase domain. Mn(2+) is bound by residues D17, H206, H208, and N242. Positions 396-506 (ELEYVAVTVC…YLNAVNKALL (111 aa)) are regulatory domain.

It belongs to the alpha-IPM synthase/homocitrate synthase family. LeuA type 1 subfamily. As to quaternary structure, homodimer. Requires Mn(2+) as cofactor.

It localises to the cytoplasm. The catalysed reaction is 3-methyl-2-oxobutanoate + acetyl-CoA + H2O = (2S)-2-isopropylmalate + CoA + H(+). It participates in amino-acid biosynthesis; L-leucine biosynthesis; L-leucine from 3-methyl-2-oxobutanoate: step 1/4. Functionally, catalyzes the condensation of the acetyl group of acetyl-CoA with 3-methyl-2-oxobutanoate (2-ketoisovalerate) to form 3-carboxy-3-hydroxy-4-methylpentanoate (2-isopropylmalate). The sequence is that of 2-isopropylmalate synthase from Methylacidiphilum infernorum (isolate V4) (Methylokorus infernorum (strain V4)).